The sequence spans 314 residues: tRNA dimethylallyltransferase (314 aa).

Gly-8–Ser-15 provides a ligand contact to ATP. Thr-10 to Ser-15 contributes to the substrate binding site.

This sequence belongs to the IPP transferase family. As to quaternary structure, monomer. It depends on Mg(2+) as a cofactor.

The catalysed reaction is adenosine(37) in tRNA + dimethylallyl diphosphate = N(6)-dimethylallyladenosine(37) in tRNA + diphosphate. In terms of biological role, catalyzes the transfer of a dimethylallyl group onto the adenine at position 37 in tRNAs that read codons beginning with uridine, leading to the formation of N6-(dimethylallyl)adenosine (i(6)A). The chain is tRNA dimethylallyltransferase from Mycobacterium tuberculosis (strain ATCC 25177 / H37Ra).